Here is a 340-residue protein sequence, read N- to C-terminus: UDP-3-O-acylglucosamine N-acyltransferase (340 aa).

Catalysis depends on His247, which acts as the Proton acceptor.

The protein belongs to the transferase hexapeptide repeat family. LpxD subfamily. In terms of assembly, homotrimer.

The enzyme catalyses a UDP-3-O-[(3R)-3-hydroxyacyl]-alpha-D-glucosamine + a (3R)-hydroxyacyl-[ACP] = a UDP-2-N,3-O-bis[(3R)-3-hydroxyacyl]-alpha-D-glucosamine + holo-[ACP] + H(+). The protein operates within bacterial outer membrane biogenesis; LPS lipid A biosynthesis. Its function is as follows. Catalyzes the N-acylation of UDP-3-O-acylglucosamine using 3-hydroxyacyl-ACP as the acyl donor. Is involved in the biosynthesis of lipid A, a phosphorylated glycolipid that anchors the lipopolysaccharide to the outer membrane of the cell. The chain is UDP-3-O-acylglucosamine N-acyltransferase from Caulobacter sp. (strain K31).